We begin with the raw amino-acid sequence, 804 residues long: Leucine--tRNA ligase (804 aa).

The 'HIGH' region motif lies at 39–50; that stretch reads PFPSGKGLHVGH. A 'KMSKS' region motif is present at residues 573–577; it reads KMSKS. Lysine 576 is a binding site for ATP.

Belongs to the class-I aminoacyl-tRNA synthetase family.

It localises to the cytoplasm. It carries out the reaction tRNA(Leu) + L-leucine + ATP = L-leucyl-tRNA(Leu) + AMP + diphosphate. This chain is Leucine--tRNA ligase, found in Lactobacillus gasseri (strain ATCC 33323 / DSM 20243 / BCRC 14619 / CIP 102991 / JCM 1131 / KCTC 3163 / NCIMB 11718 / NCTC 13722 / AM63).